The sequence spans 129 residues: MAPKAEKKPASKAPAEKKPAAKKTATSGTKKRSKTRKETYSSYIYKVLKQTHPDTGISQKAMSIMNSFVNDIFERIAGEASKLAAYNKKSTISAREIQTAVRLILPGELAKHAVSEGTRAVTKYSSAAN.

A compositionally biased stretch (basic and acidic residues) spans 1-19; the sequence is MAPKAEKKPASKAPAEKKP. The interval 1–38 is disordered; it reads MAPKAEKKPASKAPAEKKPAAKKTATSGTKKRSKTRKE. An N6-acetyllysine; alternate mark is found at Lys-7 and Lys-8. Glycyl lysine isopeptide (Lys-Gly) (interchain with G-Cter in SUMO); alternate cross-links involve residues Lys-7 and Lys-8. Ser-11 is subject to Phosphoserine. Lys-12 bears the N6-acetyllysine mark. Lys-17 bears the N6-acetyllysine; alternate mark. Lys-17 is covalently cross-linked (Glycyl lysine isopeptide (Lys-Gly) (interchain with G-Cter in SUMO); alternate). Residue Lys-18 forms a Glycyl lysine isopeptide (Lys-Gly) (interchain with G-Cter in SUMO) linkage. Lys-123 is covalently cross-linked (Glycyl lysine isopeptide (Lys-Gly) (interchain with G-Cter in ubiquitin)).

This sequence belongs to the histone H2B family. The nucleosome is a histone octamer containing two molecules each of H2A, H2B, H3 and H4 assembled in one H3-H4 heterotetramer and two H2A-H2B heterodimers. The octamer wraps approximately 147 bp of DNA. Post-translationally, monoubiquitinated by the UBC2-BRE1 complex to form H2BK123ub1. H2BK123ub1 gives a specific tag for epigenetic transcriptional activation and is also prerequisite for H3K4me and H3K79me formation. H2BK123ub1 also modulates the formation of double-strand breaks during meiosis and is a prerequisite for DNA-damage checkpoint activation. In terms of processing, phosphorylated by STE20 to form H2BS10ph during progression through meiotic prophase. May be correlated with chromosome condensation. Acetylated by GCN5 to form H2BK11ac and H2BK16ac. H2BK16ac can also be formed by ESA1. Acetylation of N-terminal lysines and particularly formation of H2BK11acK16ac has a positive effect on transcription. Post-translationally, sumoylation to form H2BK6su or H2BK7su, and probably also H2BK16su or H2BK17su, occurs preferentially near the telomeres and represses gene transcription.

The protein resides in the nucleus. It is found in the chromosome. Core component of nucleosome. Nucleosomes wrap and compact DNA into chromatin, limiting DNA accessibility to the cellular machineries which require DNA as a template. Histones thereby play a central role in transcription regulation, DNA repair, DNA replication and chromosomal stability. DNA accessibility is regulated via a complex set of post-translational modifications of histones, also called histone code, and nucleosome remodeling. This Debaryomyces hansenii (strain ATCC 36239 / CBS 767 / BCRC 21394 / JCM 1990 / NBRC 0083 / IGC 2968) (Yeast) protein is Histone H2B.2 (HTB2).